The following is a 265-amino-acid chain: Triosephosphate isomerase (265 aa).

13–15 (NWK) serves as a coordination point for substrate. The active-site Electrophile is His106. Glu179 (proton acceptor) is an active-site residue. Residues Gly185, Ser223, and 244–245 (GG) each bind substrate.

It belongs to the triosephosphate isomerase family. In terms of assembly, homodimer.

Its subcellular location is the cytoplasm. It carries out the reaction D-glyceraldehyde 3-phosphate = dihydroxyacetone phosphate. The protein operates within carbohydrate biosynthesis; gluconeogenesis. It functions in the pathway carbohydrate degradation; glycolysis; D-glyceraldehyde 3-phosphate from glycerone phosphate: step 1/1. Functionally, involved in the gluconeogenesis. Catalyzes stereospecifically the conversion of dihydroxyacetone phosphate (DHAP) to D-glyceraldehyde-3-phosphate (G3P). The sequence is that of Triosephosphate isomerase from Acinetobacter baylyi (strain ATCC 33305 / BD413 / ADP1).